A 369-amino-acid chain; its full sequence is Septin-5 (369 aa).

A Phosphothreonine modification is found at T13. The Septin-type G domain maps to 41 to 314 (KGFDFTLMVA…ENYRAHCIQQ (274 aa)). The tract at residues 51-58 (GESGLGKS) is G1 motif. GTP contacts are provided by residues 51 to 58 (GESGLGKS), T85, and G111. The segment at 108–111 (DTPG) is G3 motif. R168 is modified (omega-N-methylarginine). Residues 189–192 (AKAD) form a G4 motif region. 190 to 198 (KADCLVPSE) is a GTP binding site. Phosphoserine is present on S225. G248 and R263 together coordinate GTP. S327 carries the phosphoserine modification. T336 carries the phosphothreonine modification. A coiled-coil region spans residues 338 to 369 (DSETEKLIRMKDEELRRMQEMLQKMKQRMQDQ).

This sequence belongs to the TRAFAC class TrmE-Era-EngA-EngB-Septin-like GTPase superfamily. Septin GTPase family. Septins polymerize into heterooligomeric protein complexes that form filaments, and can associate with cellular membranes, actin filaments and microtubules. GTPase activity is required for filament formation. Interacts with SEPTIN2 and SEPTIN5. In platelets, associated with a complex containing STX4. Interacts with PRKN; this interaction leads to SEPTIN5 ubiquitination and degradation. Interacts with DYRK1A. Interacts with STX1A; in the cerebellar cortex. Post-translationally, phosphorylated by DYRK1A. In terms of tissue distribution, expressed in brain and testis and at lower level in heart, spleen, lung and kidney.

Its subcellular location is the cytoplasm. It localises to the cytoskeleton. Functionally, filament-forming cytoskeletal GTPase. May play a role in cytokinesis (Potential). May play a role in platelet secretion. The chain is Septin-5 from Rattus norvegicus (Rat).